A 540-amino-acid polypeptide reads, in one-letter code: Eukaryotic translation initiation factor 3 subunit L (540 aa).

Residues 307–515 (TFSDILLYIQ…IHIADTKVSH (209 aa)) form the PCI domain.

The protein belongs to the eIF-3 subunit L family. Component of the eukaryotic translation initiation factor 3 (eIF-3) complex. The eIF-3 complex interacts with pix.

The protein localises to the cytoplasm. Functionally, component of the eukaryotic translation initiation factor 3 (eIF-3) complex, which is involved in protein synthesis of a specialized repertoire of mRNAs and, together with other initiation factors, stimulates binding of mRNA and methionyl-tRNAi to the 40S ribosome. The eIF-3 complex specifically targets and initiates translation of a subset of mRNAs involved in cell proliferation. The chain is Eukaryotic translation initiation factor 3 subunit L from Drosophila grimshawi (Hawaiian fruit fly).